Reading from the N-terminus, the 467-residue chain is Probable citrate synthase 2, mitochondrial (467 aa).

Residues His303, His349, and Asp404 contribute to the active site.

Belongs to the citrate synthase family. Homodimer.

The protein localises to the mitochondrion matrix. It catalyses the reaction oxaloacetate + acetyl-CoA + H2O = citrate + CoA + H(+). It participates in carbohydrate metabolism; tricarboxylic acid cycle; isocitrate from oxaloacetate: step 1/2. The sequence is that of Probable citrate synthase 2, mitochondrial from Aedes aegypti (Yellowfever mosquito).